The chain runs to 397 residues: Homeobox protein knotted-1-like 2 (397 aa).

Disordered stretches follow at residues 43–68 (TFHL…SPGT), 172–191 (FEAR…DPEL), and 233–276 (NNNA…PRAE). Residues 49–58 (SGGGGGGGSG) show a composition bias toward gly residues. An ELK domain is found at 279–299 (ELKNHLLRKYSGYLSSLKQEL). A DNA-binding region (homeobox; TALE-type) is located at residues 300–363 (SKKKKKGKLP…NQRKRHWKPS (64 aa)).

This sequence belongs to the TALE/KNOX homeobox family. Expressed only in the stems.

It is found in the nucleus. Probably binds to the DNA sequence 5'-TGAC-3'. This is Homeobox protein knotted-1-like 2 from Malus domestica (Apple).